A 295-amino-acid chain; its full sequence is GTPase Era (295 aa).

Residues 3-171 enclose the Era-type G domain; that stretch reads KSGFITVIGR…LELMKKYLPE (169 aa). The interval 11–18 is G1; the sequence is GRPNVGKS. 11 to 18 is a GTP binding site; sequence GRPNVGKS. A G2 region spans residues 37-41; the sequence is QTTRN. The segment at 58 to 61 is G3; it reads DTPG. GTP is bound by residues 58-62 and 120-123; these read DTPGM and NKID. A G4 region spans residues 120-123; that stretch reads NKID. The interval 150–152 is G5; the sequence is ISA. The KH type-2 domain maps to 202–279; the sequence is LSEEVPHGIA…SLKVWVKVKK (78 aa).

The protein belongs to the TRAFAC class TrmE-Era-EngA-EngB-Septin-like GTPase superfamily. Era GTPase family. In terms of assembly, monomer.

It localises to the cytoplasm. The protein localises to the cell membrane. An essential GTPase that binds both GDP and GTP, with rapid nucleotide exchange. Plays a role in 16S rRNA processing and 30S ribosomal subunit biogenesis and possibly also in cell cycle regulation and energy metabolism. The polypeptide is GTPase Era (Clostridium tetani (strain Massachusetts / E88)).